The sequence spans 189 residues: Potassium-transporting ATPase KdpC subunit (189 aa).

Residues 8–28 (LVMLILLTLITGIAYPLLTTG) form a helical membrane-spanning segment.

The protein belongs to the KdpC family. In terms of assembly, the system is composed of three essential subunits: KdpA, KdpB and KdpC.

It is found in the cell inner membrane. Functionally, part of the high-affinity ATP-driven potassium transport (or Kdp) system, which catalyzes the hydrolysis of ATP coupled with the electrogenic transport of potassium into the cytoplasm. This subunit acts as a catalytic chaperone that increases the ATP-binding affinity of the ATP-hydrolyzing subunit KdpB by the formation of a transient KdpB/KdpC/ATP ternary complex. This is Potassium-transporting ATPase KdpC subunit from Serratia proteamaculans (strain 568).